The following is a 357-amino-acid chain: Sorbitol dehydrogenase 2 (357 aa).

Cys-43 contacts Zn(2+). Tyr-49 lines the substrate pocket. 2 residues coordinate Zn(2+): His-68 and Glu-69. A substrate-binding site is contributed by Glu-154. Residues Asp-202, Lys-207, Val-275–Met-277, and Cys-299–Arg-301 each bind NAD(+). Positions 301 and 302 each coordinate substrate.

It belongs to the zinc-containing alcohol dehydrogenase family. As to quaternary structure, homotetramer. Requires Zn(2+) as cofactor.

It catalyses the reaction keto-D-fructose + NADH + H(+) = D-sorbitol + NAD(+). The enzyme catalyses xylitol + NAD(+) = D-xylulose + NADH + H(+). Polyol dehydrogenase that catalyzes the reversible NAD(+)-dependent oxidation of various sugar alcohols. Is active with D-sorbitol (D-glucitol) and xylitol as substrates, leading to the C2-oxidized product D-fructose and D-xylulose, respectively. This chain is Sorbitol dehydrogenase 2 (SOR2), found in Saccharomyces cerevisiae (strain ATCC 204508 / S288c) (Baker's yeast).